Reading from the N-terminus, the 770-residue chain is Elongation factor G, mitochondrial (770 aa).

The N-terminal 24 residues, 1–24 (MLKLSFRSLTSRLPRLSTLVVRGY), are a transit peptide targeting the mitochondrion. The 297-residue stretch at 57 to 353 (KQIRNIGISA…AVCDYLPNPS (297 aa)) folds into the tr-type G domain. GTP-binding positions include 66 to 73 (AHIDSGKT), 151 to 155 (DTPGH), and 205 to 208 (NKMD).

Belongs to the TRAFAC class translation factor GTPase superfamily. Classic translation factor GTPase family. EF-G/EF-2 subfamily.

The protein resides in the mitochondrion. The protein operates within protein biosynthesis; polypeptide chain elongation. Functionally, mitochondrial GTPase that catalyzes the GTP-dependent ribosomal translocation step during translation elongation. During this step, the ribosome changes from the pre-translocational (PRE) to the post-translocational (POST) state as the newly formed A-site-bound peptidyl-tRNA and P-site-bound deacylated tRNA move to the P and E sites, respectively. Catalyzes the coordinated movement of the two tRNA molecules, the mRNA and conformational changes in the ribosome. This is Elongation factor G, mitochondrial (mef1) from Schizosaccharomyces pombe (strain 972 / ATCC 24843) (Fission yeast).